We begin with the raw amino-acid sequence, 116 residues long: Ribosome-binding factor A (116 aa).

This sequence belongs to the RbfA family. As to quaternary structure, monomer. Binds 30S ribosomal subunits, but not 50S ribosomal subunits or 70S ribosomes.

It localises to the cytoplasm. Its function is as follows. One of several proteins that assist in the late maturation steps of the functional core of the 30S ribosomal subunit. Associates with free 30S ribosomal subunits (but not with 30S subunits that are part of 70S ribosomes or polysomes). Required for efficient processing of 16S rRNA. May interact with the 5'-terminal helix region of 16S rRNA. This Streptococcus pneumoniae (strain ATCC 700669 / Spain 23F-1) protein is Ribosome-binding factor A.